The primary structure comprises 464 residues: Glutathione reductase (464 aa).

FAD contacts are provided by Ser-17 and Gly-18. Position 17 (Ser-17) interacts with glutathione. Arg-24 is a binding site for glutathione. 4 residues coordinate FAD: Glu-37, Thr-45, Cys-46, and Lys-54. An intrachain disulfide couples Cys-46 to Cys-51. Tyr-103 lines the glutathione pocket. Ala-119 serves as a coordination point for FAD. Residues Ala-186, Ile-189, Glu-192, Arg-209, Arg-215, and Gly-274 each contribute to the NADP(+) site. Asp-315 contacts FAD. NADP(+) is bound at residue Glu-321. Thr-323 is an FAD binding site. Arg-331 contacts glutathione. Residue Val-354 coordinates NADP(+). An FAD-binding site is contributed by His-453. The active-site Proton acceptor is the His-453.

This sequence belongs to the class-I pyridine nucleotide-disulfide oxidoreductase family. As to quaternary structure, homodimer. FAD serves as cofactor.

Its subcellular location is the cytoplasm. It localises to the mitochondrion. It carries out the reaction 2 glutathione + NADP(+) = glutathione disulfide + NADPH + H(+). Its function is as follows. Catalyzes the reduction of glutathione disulfide (GSSG) to reduced glutathione (GSH). Constitutes the major mechanism to maintain a high GSH:GSSG ratio in the cytosol. The chain is Glutathione reductase (pgr1) from Schizosaccharomyces pombe (strain 972 / ATCC 24843) (Fission yeast).